Here is a 391-residue protein sequence, read N- to C-terminus: Xylose isomerase (391 aa).

Catalysis depends on residues histidine 54 and aspartate 57. Residues glutamate 181, glutamate 217, histidine 220, aspartate 245, aspartate 255, aspartate 257, and aspartate 287 each coordinate Mg(2+).

Belongs to the xylose isomerase family. In terms of assembly, homotetramer. It depends on Mg(2+) as a cofactor.

The protein resides in the cytoplasm. It carries out the reaction alpha-D-xylose = alpha-D-xylulofuranose. Its function is as follows. Involved in D-xylose catabolism. The sequence is that of Xylose isomerase (xylA) from Streptomyces albus G.